The following is a 121-amino-acid chain: Protein yippee-like 5 (121 aa).

Residues 13 to 110 form the Yippee domain; the sequence is RLFSCANCDT…LERALVRESE (98 aa). Residues C17, C20, C73, and C76 each contribute to the Zn(2+) site. A Phosphoserine modification is found at S118.

The protein belongs to the yippee family. Identified in the CTLH complex that contains GID4, RANBP9 and/or RANBP10, MKLN1, MAEA, RMND5A (or alternatively its paralog RMND5B), GID8, ARMC8, WDR26 and YPEL5. Within this complex, MAEA, RMND5A (or alternatively its paralog RMND5B), GID8, WDR26, and RANBP9 and/or RANBP10 form the catalytic core, while GID4, MKLN1, ARMC8 and YPEL5 have ancillary roles. Interacts with RANBP9 and RANBP10.

Its subcellular location is the nucleus. The protein resides in the cytoplasm. It is found in the cytoskeleton. It localises to the microtubule organizing center. The protein localises to the centrosome. Its subcellular location is the spindle pole. The protein resides in the midbody. Functionally, component of the CTLH E3 ubiquitin-protein ligase complex that selectively accepts ubiquitin from UBE2H and mediates ubiquitination and subsequent proteasomal degradation of the transcription factor HBP1. Required for normal cell proliferation. The sequence is that of Protein yippee-like 5 (YPEL5) from Bos taurus (Bovine).